The primary structure comprises 361 residues: MGGDIFGRELRLISFGESHGPVVGAIVEGAPAGLPLSEEDVQRILDLRRPGQSELVSQRAERDRVEILSGVFNGFTTGAPISMIVRNEDIDSSYYEEISRFPRPGHADYVARLKYSGYNDFRGGGRFSGRLTVSMCMAGAVAMKILEKLGIEVMAYSLEIGGERAEGFTLDDARNYRYMNPVRAPNEESYLRMAAAIERARREGDSLGGIVEAIALNVPPGLGEPIFDTIEGDIAKAMFSIPAVKGVEFGSGFRAARMRGSEHNDPIRVIDGKIRYKKNDHGGAIGGITTGEPIILRVAFKPTPSIAKPQETVDLELLRNVEIKVKGRHDPCVVPRAVVVVESMLAFTIADHIMRSMRGAI.

Residue Arg48 coordinates NADP(+). Residues Arg126 to Ser128, Gly286, Lys301 to Ser305, and Arg328 contribute to the FMN site.

It belongs to the chorismate synthase family. FMNH2 is required as a cofactor.

It carries out the reaction 5-O-(1-carboxyvinyl)-3-phosphoshikimate = chorismate + phosphate. Its pathway is metabolic intermediate biosynthesis; chorismate biosynthesis; chorismate from D-erythrose 4-phosphate and phosphoenolpyruvate: step 7/7. Its function is as follows. Catalyzes the anti-1,4-elimination of the C-3 phosphate and the C-6 proR hydrogen from 5-enolpyruvylshikimate-3-phosphate (EPSP) to yield chorismate, which is the branch point compound that serves as the starting substrate for the three terminal pathways of aromatic amino acid biosynthesis. This reaction introduces a second double bond into the aromatic ring system. In Korarchaeum cryptofilum (strain OPF8), this protein is Chorismate synthase.